Reading from the N-terminus, the 549-residue chain is OBERON-like protein (549 aa).

Residues methionine 1–threonine 56 form a disordered region. 2 stretches are compositionally biased toward polar residues: residues proline 28 to aspartate 38 and serine 45 to threonine 56. The PHD-type zinc-finger motif lies at leucine 224–threonine 288. A coiled-coil region spans residues valine 394 to glutamate 520. The tract at residues glutamine 519–methionine 549 is disordered. A compositionally biased stretch (polar residues) spans serine 521 to methionine 538.

Self-interacts and probably forms heteromers. Binds to VPg of pea seed borne mosaic virus (PSbMV), turnip mosaic virus (TuMV) and lettuce mosaic virus (LMV), but not with VPg of tobacco etch virus (TEV), cowpea mosaic virus (CPMV), tomato black ring virus (TBRV) and grapevine fan leaf virus (GFLV).

The protein localises to the nucleus. Functionally, required for the maintenance and/or establishment of both the shoot and root meristems, probably by controlling the expression of the meristem genes and of genes required for auxin responses. Involved in the development of the basal pole and in auxin-mediated root and vascular development in the embryo. Confers sensitivity to turnip mosaic virus (TuMV) probably by promoting viral movement and multiplication via interaction with TuMV VPg. This Nicotiana benthamiana protein is OBERON-like protein (PVIP).